A 207-amino-acid polypeptide reads, in one-letter code: Small ribosomal subunit protein uS4 (207 aa).

The disordered stretch occupies residues 30–54 (DKCKLDSKPGQHGRTSGARTSDYGN). Over residues 42–53 (GRTSGARTSDYG) the composition is skewed to polar residues. Positions 97–160 (SRLDNVVYRM…KKQVRIAEAL (64 aa)) constitute an S4 RNA-binding domain.

Belongs to the universal ribosomal protein uS4 family. In terms of assembly, part of the 30S ribosomal subunit. Contacts protein S5. The interaction surface between S4 and S5 is involved in control of translational fidelity.

Its function is as follows. One of the primary rRNA binding proteins, it binds directly to 16S rRNA where it nucleates assembly of the body of the 30S subunit. Functionally, with S5 and S12 plays an important role in translational accuracy. This is Small ribosomal subunit protein uS4 from Cupriavidus taiwanensis (strain DSM 17343 / BCRC 17206 / CCUG 44338 / CIP 107171 / LMG 19424 / R1) (Ralstonia taiwanensis (strain LMG 19424)).